The following is a 347-amino-acid chain: High mobility group protein 20A (347 aa).

Polar residues-rich tracts occupy residues 1–10 (MENLMTSSTL) and 40–49 (SGATSSTNNP). 2 disordered regions span residues 1–113 (MENL…YVRF) and 179–211 (FSRKTQDRQKGKSHRQDAARQATHDHEKETEVK). Low complexity predominate over residues 55–66 (LSQGQLLQSESS). A compositionally biased stretch (basic and acidic residues) spans 72–82 (NEQRHEDEQRS). Residues 83–96 (KRGGWSKGRKRKKP) show a composition bias toward basic residues. The segment at residues 103–171 (PKSPLTGYVR…RYMKELEQYQ (69 aa)) is a DNA-binding region (HMG box). Ser-105 carries the phosphoserine modification. Residues 182-211 (KTQDRQKGKSHRQDAARQATHDHEKETEVK) show a composition bias toward basic and acidic residues. Residues 229–273 (SKAREAELRQLRKSNMEFEERNAALQKHVESMRTAVEKLEVDVIQ) are a coiled coil.

Interacts with DTNB. In terms of tissue distribution, ubiquitous.

Its subcellular location is the nucleus. In terms of biological role, plays a role in neuronal differentiation as chromatin-associated protein. Acts as inhibitor of HMG20B. Overcomes the repressive effects of the neuronal silencer REST and induces the activation of neuronal-specific genes. Involved in the recruitment of the histone methyltransferase KMT2A/MLL1 and consequent increased methylation of histone H3 lysine 4. This Homo sapiens (Human) protein is High mobility group protein 20A (HMG20A).